A 182-amino-acid polypeptide reads, in one-letter code: uncharacterized protein (182 aa).

A Nudix hydrolase domain is found at 36-164 (LRHRATYIVV…TPDSLKALSL (129 aa)). Positions 73-95 (GGVVQSGENYLESARREAEEELG) match the Nudix box motif. Residues Glu89 and Glu93 each coordinate Mg(2+).

It belongs to the Nudix hydrolase family. Requires Mg(2+) as cofactor.

This is an uncharacterized protein from Yersinia pestis.